Reading from the N-terminus, the 442-residue chain is Trigger factor (442 aa).

The PPIase FKBP-type domain maps to 162 to 247 (GDQVTIDAIG…IKAVHTSEPT (86 aa)).

It belongs to the FKBP-type PPIase family. Tig subfamily.

It localises to the cytoplasm. The catalysed reaction is [protein]-peptidylproline (omega=180) = [protein]-peptidylproline (omega=0). In terms of biological role, involved in protein export. Acts as a chaperone by maintaining the newly synthesized protein in an open conformation. Functions as a peptidyl-prolyl cis-trans isomerase. This chain is Trigger factor, found in Rickettsia canadensis (strain McKiel).